Consider the following 183-residue polypeptide: UPF0200 protein MMP1282 (183 aa).

8–15 (GMPGSGKS) is a binding site for ATP.

This sequence belongs to the UPF0200 family.

This is UPF0200 protein MMP1282 from Methanococcus maripaludis (strain DSM 14266 / JCM 13030 / NBRC 101832 / S2 / LL).